Reading from the N-terminus, the 109-residue chain is Thiosulfate sulfurtransferase GlpE (109 aa).

One can recognise a Rhodanese domain in the interval 17–105 (AQGQALLLDI…WQRAYPEEVA (89 aa)). Cys65 functions as the Cysteine persulfide intermediate in the catalytic mechanism.

Belongs to the GlpE family.

The protein localises to the cytoplasm. It catalyses the reaction thiosulfate + hydrogen cyanide = thiocyanate + sulfite + 2 H(+). The enzyme catalyses thiosulfate + [thioredoxin]-dithiol = [thioredoxin]-disulfide + hydrogen sulfide + sulfite + 2 H(+). Functionally, transferase that catalyzes the transfer of sulfur from thiosulfate to thiophilic acceptors such as cyanide or dithiols. May function in a CysM-independent thiosulfate assimilation pathway by catalyzing the conversion of thiosulfate to sulfite, which can then be used for L-cysteine biosynthesis. The protein is Thiosulfate sulfurtransferase GlpE of Edwardsiella ictaluri (strain 93-146).